Consider the following 380-residue polypeptide: Succinyl-diaminopimelate desuccinylase (380 aa).

His-69 serves as a coordination point for Zn(2+). Asp-71 is an active-site residue. Residue Asp-102 coordinates Zn(2+). Glu-135 serves as the catalytic Proton acceptor. 3 residues coordinate Zn(2+): Glu-136, Glu-164, and His-353.

Belongs to the peptidase M20A family. DapE subfamily. As to quaternary structure, homodimer. Requires Zn(2+) as cofactor. Co(2+) serves as cofactor.

It catalyses the reaction N-succinyl-(2S,6S)-2,6-diaminopimelate + H2O = (2S,6S)-2,6-diaminopimelate + succinate. The protein operates within amino-acid biosynthesis; L-lysine biosynthesis via DAP pathway; LL-2,6-diaminopimelate from (S)-tetrahydrodipicolinate (succinylase route): step 3/3. Catalyzes the hydrolysis of N-succinyl-L,L-diaminopimelic acid (SDAP), forming succinate and LL-2,6-diaminopimelate (DAP), an intermediate involved in the bacterial biosynthesis of lysine and meso-diaminopimelic acid, an essential component of bacterial cell walls. The sequence is that of Succinyl-diaminopimelate desuccinylase from Phenylobacterium zucineum (strain HLK1).